We begin with the raw amino-acid sequence, 83 residues long: Small ribosomal subunit protein eS21 (83 aa).

This sequence belongs to the eukaryotic ribosomal protein eS21 family. In terms of assembly, component of the 40S small ribosomal subunit. Interacts with sta.

The protein localises to the cytoplasm. It is found in the cytosol. It localises to the rough endoplasmic reticulum. In terms of biological role, may be an associated component of the ribosome rather than a core structural subunit. May act as a translation initiation factor. Has a role in regulation of cell proliferation in the hematopoietic organs and the imaginal disks of larva. The chain is Small ribosomal subunit protein eS21 (RpS21) from Drosophila grimshawi (Hawaiian fruit fly).